A 190-amino-acid polypeptide reads, in one-letter code: Protein PLANT CADMIUM RESISTANCE 8 (190 aa).

Residues 1-31 (MGRVTTPSEEDSNNGLPVQQPGTPNQRTRVP) form a disordered region. Positions 13-28 (NNGLPVQQPGTPNQRT) are enriched in polar residues. The residue at position 23 (threonine 23) is a Phosphothreonine. A helical transmembrane segment spans residues 94 to 113 (LGTFMYLLMMPALCSHWVMG).

This sequence belongs to the cornifelin family.

It localises to the cell membrane. Its function is as follows. May be involved in heavy metals transport. The sequence is that of Protein PLANT CADMIUM RESISTANCE 8 (PCR8) from Arabidopsis thaliana (Mouse-ear cress).